We begin with the raw amino-acid sequence, 191 residues long: Small ribosomal subunit protein uS7 (191 aa).

The protein belongs to the universal ribosomal protein uS7 family. Part of the 30S ribosomal subunit.

Functionally, one of the primary rRNA binding proteins, it binds directly to 16S rRNA where it nucleates assembly of the head domain of the 30S subunit. Is located at the subunit interface close to the decoding center. The protein is Small ribosomal subunit protein uS7 of Methanocaldococcus jannaschii (strain ATCC 43067 / DSM 2661 / JAL-1 / JCM 10045 / NBRC 100440) (Methanococcus jannaschii).